We begin with the raw amino-acid sequence, 338 residues long: Ketol-acid reductoisomerase (NADP(+)) (338 aa).

The 181-residue stretch at 1–181 folds into the KARI N-terminal Rossmann domain; sequence MNVYYDKDCD…GGGRSGIIET (181 aa). Residues 24 to 27, arginine 47, serine 50, serine 52, and 82 to 85 each bind NADP(+); these read YGSQ and DEFQ. The active site involves histidine 107. Glycine 133 serves as a coordination point for NADP(+). The KARI C-terminal knotted domain maps to 182–327; the sequence is TFKDETETDL…AKLRSMMPWI (146 aa). Residues aspartate 190, glutamate 194, glutamate 226, and glutamate 230 each contribute to the Mg(2+) site. Serine 251 is a binding site for substrate.

This sequence belongs to the ketol-acid reductoisomerase family. The cofactor is Mg(2+).

The catalysed reaction is (2R)-2,3-dihydroxy-3-methylbutanoate + NADP(+) = (2S)-2-acetolactate + NADPH + H(+). The enzyme catalyses (2R,3R)-2,3-dihydroxy-3-methylpentanoate + NADP(+) = (S)-2-ethyl-2-hydroxy-3-oxobutanoate + NADPH + H(+). It functions in the pathway amino-acid biosynthesis; L-isoleucine biosynthesis; L-isoleucine from 2-oxobutanoate: step 2/4. It participates in amino-acid biosynthesis; L-valine biosynthesis; L-valine from pyruvate: step 2/4. Involved in the biosynthesis of branched-chain amino acids (BCAA). Catalyzes an alkyl-migration followed by a ketol-acid reduction of (S)-2-acetolactate (S2AL) to yield (R)-2,3-dihydroxy-isovalerate. In the isomerase reaction, S2AL is rearranged via a Mg-dependent methyl migration to produce 3-hydroxy-3-methyl-2-ketobutyrate (HMKB). In the reductase reaction, this 2-ketoacid undergoes a metal-dependent reduction by NADPH to yield (R)-2,3-dihydroxy-isovalerate. This is Ketol-acid reductoisomerase (NADP(+)) from Psychrobacter sp. (strain PRwf-1).